A 184-amino-acid polypeptide reads, in one-letter code: Probable RNA 2'-phosphotransferase (184 aa).

Belongs to the KptA/TPT1 family.

Functionally, removes the 2'-phosphate from RNA via an intermediate in which the phosphate is ADP-ribosylated by NAD followed by a presumed transesterification to release the RNA and generate ADP-ribose 1''-2''-cyclic phosphate (APPR&gt;P). May function as an ADP-ribosylase. The sequence is that of Probable RNA 2'-phosphotransferase from Escherichia coli (strain K12 / MC4100 / BW2952).